The sequence spans 403 residues: F-box protein At1g60400 (403 aa).

Residues 13-59 form the F-box domain; sequence IDRLSALPEHLLCRILSELSTKDSVRTSVLSKHWRNLWLHVPVLELE.

In Arabidopsis thaliana (Mouse-ear cress), this protein is F-box protein At1g60400.